A 196-amino-acid chain; its full sequence is UMP-CMP kinase (196 aa).

13 to 18 (GAGKGT) contacts ATP. Ser-33 carries the phosphoserine modification. The interval 33–63 (SAGELLRDERKNPDSQYGELIEKYIKDGKIV) is NMP. Arg-39 is an a ribonucleoside 5'-phosphate binding site. N6-acetyllysine is present on residues Lys-43 and Lys-55. A ribonucleoside 5'-phosphate is bound by residues 61 to 63 (KIV) and 93 to 96 (GFPR). Asn-100 lines the CMP pocket. An N6-succinyllysine modification is found at Lys-106. Positions 133-143 (ERGKSSGRSDD) are LID. Residue Arg-134 participates in ATP binding. Arg-140 and Arg-151 together coordinate a ribonucleoside 5'-phosphate. Lys-179 contributes to the ATP binding site. At Ser-180 the chain carries Phosphoserine.

Belongs to the adenylate kinase family. UMP-CMP kinase subfamily. Monomer. It depends on Mg(2+) as a cofactor.

Its subcellular location is the nucleus. The protein resides in the cytoplasm. It catalyses the reaction CMP + ATP = CDP + ADP. The enzyme catalyses dCMP + ATP = dCDP + ADP. It carries out the reaction UMP + ATP = UDP + ADP. The catalysed reaction is a 2'-deoxyribonucleoside 5'-diphosphate + ATP = a 2'-deoxyribonucleoside 5'-triphosphate + ADP. It catalyses the reaction a ribonucleoside 5'-diphosphate + ATP = a ribonucleoside 5'-triphosphate + ADP. Its function is as follows. Catalyzes the phosphorylation of pyrimidine nucleoside monophosphates at the expense of ATP. Plays an important role in de novo pyrimidine nucleotide biosynthesis. Has preference for UMP and CMP as phosphate acceptors. Also displays broad nucleoside diphosphate kinase activity. This is UMP-CMP kinase from Sus scrofa (Pig).